Reading from the N-terminus, the 436-residue chain is MTASVNVIGAGLAGSEAAWQIANQGVKVRLYEMRPQKLTPAHHNENFAELVCTNSLRANRLTNAAGLLKEEMRTFNSIIMESADKHSVPAGGALAVDRETFSKEVTEKLHNHPNVEIINEEIDEIPEGLTVIATGPLTSDALAKDITKFTGSDGLFFFDAAAPILEKSSLDMDKVYLKSRYDKGEAAYLNAPMTKDEFYNFYNELIKAETAELHDFEDDKFFEGCMPIEEIASRGAQTMLYGPLKPVGLEDPRTGKEPFAVVQLRQDNAAGDLYNIVGFQTHLKWGEQKRVFSMIPGLENARFVRYGVMHRNTFLCSPEVMQATYQTKKRLDLFFAGQMTGVEGYVESAASGLYAGLNAARIAQGKDPVIFPEETMMGAMAHYITHASVKNFQPINANFGIVPKLQERIRNKQERNLKISERAIDRIKKFKNLNFD.

An FAD-binding site is contributed by 9–14 (GAGLAG).

The protein belongs to the MnmG family. TrmFO subfamily. Requires FAD as cofactor.

It localises to the cytoplasm. The catalysed reaction is uridine(54) in tRNA + (6R)-5,10-methylene-5,6,7,8-tetrahydrofolate + NADH + H(+) = 5-methyluridine(54) in tRNA + (6S)-5,6,7,8-tetrahydrofolate + NAD(+). It carries out the reaction uridine(54) in tRNA + (6R)-5,10-methylene-5,6,7,8-tetrahydrofolate + NADPH + H(+) = 5-methyluridine(54) in tRNA + (6S)-5,6,7,8-tetrahydrofolate + NADP(+). Its function is as follows. Catalyzes the folate-dependent formation of 5-methyl-uridine at position 54 (M-5-U54) in all tRNAs. In Ligilactobacillus salivarius (strain UCC118) (Lactobacillus salivarius), this protein is Methylenetetrahydrofolate--tRNA-(uracil-5-)-methyltransferase TrmFO.